The sequence spans 198 residues: Recombination protein RecR (198 aa).

The C4-type zinc finger occupies 57–72 (CLNCGCLTDEAACYFC). The Toprim domain maps to 80–175 (QIICVTAFPR…QISRLAFGLP (96 aa)).

The protein belongs to the RecR family.

In terms of biological role, may play a role in DNA repair. It seems to be involved in an RecBC-independent recombinational process of DNA repair. It may act with RecF and RecO. This is Recombination protein RecR from Protochlamydia amoebophila (strain UWE25).